The primary structure comprises 401 residues: Probable tRNA sulfurtransferase (401 aa).

A THUMP domain is found at 63-168 (TTAEQALSYL…EREAFLYGAR (106 aa)). ATP-binding positions include 186-187 (LL), 211-212 (YF), R268, G290, and Q299.

This sequence belongs to the ThiI family.

The protein localises to the cytoplasm. It catalyses the reaction [ThiI sulfur-carrier protein]-S-sulfanyl-L-cysteine + a uridine in tRNA + 2 reduced [2Fe-2S]-[ferredoxin] + ATP + H(+) = [ThiI sulfur-carrier protein]-L-cysteine + a 4-thiouridine in tRNA + 2 oxidized [2Fe-2S]-[ferredoxin] + AMP + diphosphate. It carries out the reaction [ThiS sulfur-carrier protein]-C-terminal Gly-Gly-AMP + S-sulfanyl-L-cysteinyl-[cysteine desulfurase] + AH2 = [ThiS sulfur-carrier protein]-C-terminal-Gly-aminoethanethioate + L-cysteinyl-[cysteine desulfurase] + A + AMP + 2 H(+). Its pathway is cofactor biosynthesis; thiamine diphosphate biosynthesis. Its function is as follows. Catalyzes the ATP-dependent transfer of a sulfur to tRNA to produce 4-thiouridine in position 8 of tRNAs, which functions as a near-UV photosensor. Also catalyzes the transfer of sulfur to the sulfur carrier protein ThiS, forming ThiS-thiocarboxylate. This is a step in the synthesis of thiazole, in the thiamine biosynthesis pathway. The sulfur is donated as persulfide by IscS. The sequence is that of Probable tRNA sulfurtransferase from Treponema pallidum (strain Nichols).